The chain runs to 269 residues: Indole-3-glycerol phosphate synthase (269 aa).

Belongs to the TrpC family.

The catalysed reaction is 1-(2-carboxyphenylamino)-1-deoxy-D-ribulose 5-phosphate + H(+) = (1S,2R)-1-C-(indol-3-yl)glycerol 3-phosphate + CO2 + H2O. It participates in amino-acid biosynthesis; L-tryptophan biosynthesis; L-tryptophan from chorismate: step 4/5. The protein is Indole-3-glycerol phosphate synthase of Streptomyces griseus subsp. griseus (strain JCM 4626 / CBS 651.72 / NBRC 13350 / KCC S-0626 / ISP 5235).